The primary structure comprises 1269 residues: Protein flightless-1 homolog (1269 aa).

M1 carries the N-acetylmethionine modification. Residues 1–427 (MEATGVLPFV…SGPKDPMARK (427 aa)) form an interaction with LRRFIP1 and LRRFIP2 region. LRR repeat units lie at residues 7-32 (LPFV…VKAM), 33-55 (TSLR…LAAL), 56-78 (QKLE…LSSL), 80-103 (SLRA…IFKL), 104-126 (DDLS…LENA), 127-149 (KNML…LFIN), 150-173 (LTDL…MRRL), 175-196 (HLQT…QLPA), 197-222 (MTAL…LEGL), 223-245 (SNLA…LYTL), 247-268 (SLRR…IDQW), 269-291 (VHVE…ICKL), 293-316 (KLKK…IGKL), 318-339 (NLEE…LCRC), 340-363 (PKLR…HFLT), and 365-385 (IEVL…PADR). The residue at position 21 (K21) is an N6-acetyllysine. Phosphoserine is present on S406. S436 carries the phosphoserine; by SGK3 modification. The segment at 452-473 (VAQEKNKKQEESADARAPSGKV) is disordered. Residues 453–465 (AQEKNKKQEESAD) are compositionally biased toward basic and acidic residues. Residues 495-827 (VGQLPGLTIW…TVSRSLEGTE (333 aa)) are interaction with ACTL6A. Gelsolin-like repeat units lie at residues 509–591 (FVPV…EEFL), 629–703 (NIKL…PEFW), and 758–831 (ELMP…AQVF). Residue T818 is modified to Phosphothreonine; by SGK3. Residues S856 and S860 each carry the phosphoserine modification. A disordered region spans residues 951-975 (KKEDKEEKAEGKEGEEATAEAEEKQ). Residues 952–965 (KEDKEEKAEGKEGE) are compositionally biased toward basic and acidic residues. Over residues 966–975 (EATAEAEEKQ) the composition is skewed to acidic residues. Gelsolin-like repeat units follow at residues 1075–1143 (TDSS…PENF) and 1181–1254 (KCSD…QHAF).

Interacts with actin, ACTL6A, NCOA2 and CARM1. Interacts with LRRFIP1, LRRFIP2 and MYD88. Upon LPS stimulation, LRRFIP2 competes for MYD88-binding. LRRFIP1 constitutively blocks the interaction with MyD88, even in the absence of LPS. Interacts with the nuclear receptors ESR1 and THRB. Interacts with SGK3. Interacts (via the gelsolin-like region) with TMOD1. Interacts with (via the gelsolin-like region) TMOD3. Interacts with LMOD2, VCL, GSN and DES. In terms of tissue distribution, strongest expression in skeletal muscle with high expression also in the heart and lung.

It localises to the nucleus. It is found in the cytoplasm. The protein localises to the cytoskeleton. The protein resides in the microtubule organizing center. Its subcellular location is the centrosome. It localises to the cell projection. It is found in the podosome. The protein localises to the cell junction. The protein resides in the focal adhesion. Functionally, is a regulator of actin polymerization, required for proper myofibril organization and regulation of the length of sarcomeric thin filaments. It also plays a role in the assembly of cardiomyocyte cell adhesion complexes. Regulates cytoskeletal rearrangements involved in cytokinesis and cell migration, by inhibiting Rac1-dependent paxillin phosphorylation. May play a role as coactivator in transcriptional activation by hormone-activated nuclear receptors (NR) and acts in cooperation with NCOA2 and CARM1. Involved in estrogen hormone signaling. In Homo sapiens (Human), this protein is Protein flightless-1 homolog (FLII).